The primary structure comprises 144 residues: Glutamyl-tRNA(Gln) amidotransferase subunit C, mitochondrial (144 aa).

Residues 1 to 17 (MFRRSVSFVRSHVLRSF) constitute a mitochondrion transit peptide.

Belongs to the GatC family. Subunit of the heterotrimeric GatCAB amidotransferase (AdT) complex, composed of A, B and C subunits.

It localises to the mitochondrion. The enzyme catalyses L-glutamyl-tRNA(Gln) + L-glutamine + ATP + H2O = L-glutaminyl-tRNA(Gln) + L-glutamate + ADP + phosphate + H(+). Allows the formation of correctly charged Gln-tRNA(Gln) through the transamidation of misacylated Glu-tRNA(Gln) in the mitochondria. The reaction takes place in the presence of glutamine and ATP through an activated gamma-phospho-Glu-tRNA(Gln). The sequence is that of Glutamyl-tRNA(Gln) amidotransferase subunit C, mitochondrial from Ixodes scapularis (Black-legged tick).